Reading from the N-terminus, the 212-residue chain is Pyrrolidone-carboxylate peptidase (212 aa).

Residues glutamate 80, cysteine 143, and histidine 165 contribute to the active site.

It belongs to the peptidase C15 family. In terms of assembly, homotetramer.

It is found in the cytoplasm. The catalysed reaction is Release of an N-terminal pyroglutamyl group from a polypeptide, the second amino acid generally not being Pro.. Its function is as follows. Removes 5-oxoproline from various penultimate amino acid residues except L-proline. The polypeptide is Pyrrolidone-carboxylate peptidase (Aliivibrio fischeri (strain MJ11) (Vibrio fischeri)).